The primary structure comprises 145 residues: Basic phospholipase A2 PC17 (145 aa).

The first 21 residues, 1 to 21 (MYPAHLLLLLAVCVSLLGASA), serve as a signal peptide directing secretion. Residues 22–27 (IPPLPL) constitute a propeptide that is removed on maturation. 7 disulfides stabilise this stretch: Cys38-Cys98, Cys54-Cys144, Cys56-Cys72, Cys71-Cys125, Cys78-Cys118, Cys87-Cys111, and Cys105-Cys116. Ca(2+) is bound by residues Tyr55, Gly57, and Gly59. The active site involves His75. Asp76 provides a ligand contact to Ca(2+). Asp119 is an active-site residue.

This sequence belongs to the phospholipase A2 family. Group I subfamily. D49 sub-subfamily. It depends on Ca(2+) as a cofactor.

Its subcellular location is the secreted. It carries out the reaction a 1,2-diacyl-sn-glycero-3-phosphocholine + H2O = a 1-acyl-sn-glycero-3-phosphocholine + a fatty acid + H(+). Functionally, PLA2 catalyzes the calcium-dependent hydrolysis of the 2-acyl groups in 3-sn-phosphoglycerides. In Laticauda laticaudata (Blue-ringed sea krait), this protein is Basic phospholipase A2 PC17.